The primary structure comprises 394 residues: 1-deoxy-D-xylulose 5-phosphate reductoisomerase (394 aa).

NADPH contacts are provided by T12, G13, S14, I15, K39, Q40, and N126. K127 is a binding site for 1-deoxy-D-xylulose 5-phosphate. E128 contacts NADPH. D152 provides a ligand contact to Mn(2+). 1-deoxy-D-xylulose 5-phosphate is bound by residues S153, E154, S183, and H206. E154 is a binding site for Mn(2+). G212 contacts NADPH. 1-deoxy-D-xylulose 5-phosphate-binding residues include S219, N224, K225, and E228. E228 provides a ligand contact to Mn(2+).

The protein belongs to the DXR family. It depends on Mg(2+) as a cofactor. Requires Mn(2+) as cofactor.

It catalyses the reaction 2-C-methyl-D-erythritol 4-phosphate + NADP(+) = 1-deoxy-D-xylulose 5-phosphate + NADPH + H(+). Its pathway is isoprenoid biosynthesis; isopentenyl diphosphate biosynthesis via DXP pathway; isopentenyl diphosphate from 1-deoxy-D-xylulose 5-phosphate: step 1/6. Its function is as follows. Catalyzes the NADPH-dependent rearrangement and reduction of 1-deoxy-D-xylulose-5-phosphate (DXP) to 2-C-methyl-D-erythritol 4-phosphate (MEP). The polypeptide is 1-deoxy-D-xylulose 5-phosphate reductoisomerase (Neisseria meningitidis serogroup B (strain ATCC BAA-335 / MC58)).